The sequence spans 39 residues: Cytochrome b559 subunit beta (39 aa).

The helical transmembrane segment at 14-30 threads the bilayer; sequence WLAVHGLAVPTVFFLGS. His18 contributes to the heme binding site.

This sequence belongs to the PsbE/PsbF family. In terms of assembly, heterodimer of an alpha subunit and a beta subunit. PSII is composed of 1 copy each of membrane proteins PsbA, PsbB, PsbC, PsbD, PsbE, PsbF, PsbH, PsbI, PsbJ, PsbK, PsbL, PsbM, PsbT, PsbX, PsbY, PsbZ, Psb30/Ycf12, at least 3 peripheral proteins of the oxygen-evolving complex and a large number of cofactors. It forms dimeric complexes. Heme b serves as cofactor.

It localises to the plastid. Its subcellular location is the chloroplast thylakoid membrane. This b-type cytochrome is tightly associated with the reaction center of photosystem II (PSII). PSII is a light-driven water:plastoquinone oxidoreductase that uses light energy to abstract electrons from H(2)O, generating O(2) and a proton gradient subsequently used for ATP formation. It consists of a core antenna complex that captures photons, and an electron transfer chain that converts photonic excitation into a charge separation. In Adiantum capillus-veneris (Maidenhair fern), this protein is Cytochrome b559 subunit beta.